The primary structure comprises 783 residues: Ras and Rab interactor 1 (783 aa).

An N-acetylmethionine modification is found at Met-1. The disordered stretch occupies residues 1 to 53 (MESPGESGAGSPGAPSPSSFTTGHLAREKPAQDPLYDVPNASGGQAGGPQRPG). Ser-3 and Ser-16 each carry phosphoserine. Residue Tyr-36 is modified to Phosphotyrosine; by ABL1 and ABL2. The SH2 domain occupies 69–163 (WLQLQANAAA…ILLLPLQLPR (95 aa)). Phosphoserine is present on residues Ser-210, Ser-258, Ser-333, and Ser-337. 2 disordered regions span residues 250-282 (STETSSPLSPPAVPPPPVPVLPGAVPSQTERLP) and 295-342 (YRVP…HLGR). Positions 257 to 269 (LSPPAVPPPPVPV) are enriched in pro residues. Residues 294-727 (GYRVPAGSGP…GSGQSEARSR (434 aa)) form a ras and 14-3-3 protein binding region region. A compositionally biased stretch (low complexity) spans 317 to 334 (GSPSSSEEEGVPGSRGSP). Ser-351 is subject to Phosphoserine; by PKD/PRKD1. A VPS9 domain is found at 456-598 (LAADGSLGRL…LSGLGQAHTL (143 aa)). Phosphoserine is present on residues Ser-609 and Ser-611. The Ras-associating domain maps to 624–706 (FQHLLRVAYQ…GYLVYRRAEW (83 aa)). Arg-692 carries the post-translational modification Omega-N-methylarginine. A disordered region spans residues 709–783 (TQGAVTEEEG…EAEGSRAAEE (75 aa)). Residues 762 to 772 (QAQEGPAQPGE) show a composition bias toward low complexity.

Belongs to the RIN (Ras interaction/interference) family. Interacts with the GTP-bound form of Ras proteins (NRAS, HRAS and KRAS). This interaction prevents the association between RAF1 and Ras. Interacts with 14-3-3 proteins YWHAB, YWHAE and YWHAZ when phosphorylated on Ser-351. Interacts with the SH3 domain of ABL1 and ABL2. Interacts with RAB5A. The interaction with Ras is probably regulated and antagonized by the interaction with 14-3-3 proteins. The interaction with 14-3-3 proteins is regulated by phosphorylation on Ser-351. Post-translationally, phosphorylated on tyrosine residues by ABL1 and ABL2. Phosphorylation at Ser-351 by PRKD1 induces interaction with 14-3-3 proteins. In terms of tissue distribution, expressed in all tissues examined with high levels in brain, placenta and pancreas.

Its subcellular location is the cytoplasm. It is found in the membrane. The protein resides in the cytoskeleton. Ras effector protein, which may serve as an inhibitory modulator of neuronal plasticity in aversive memory formation. Can affect Ras signaling at different levels. First, by competing with RAF1 protein for binding to activated Ras. Second, by enhancing signaling from ABL1 and ABL2, which regulate cytoskeletal remodeling. Third, by activating RAB5A, possibly by functioning as a guanine nucleotide exchange factor (GEF) for RAB5A, by exchanging bound GDP for free GTP, and facilitating Ras-activated receptor endocytosis. The protein is Ras and Rab interactor 1 (RIN1) of Homo sapiens (Human).